Consider the following 327-residue polypeptide: ATP-dependent 6-phosphofructokinase (327 aa).

Residues G12, 73–74 (RL), and 103–106 (GDGS) contribute to the ATP site. Position 104 (D104) interacts with Mg(2+). 126 to 128 (TID) serves as a coordination point for substrate. D128 serves as the catalytic Proton acceptor. ADP is bound at residue R155. Residues R163 and 170-172 (MGH) contribute to the substrate site. ADP-binding positions include 186-188 (GAD) and 214-216 (KRS). Substrate is bound by residues E223, R245, and 251–254 (HTQR).

The protein belongs to the phosphofructokinase type A (PFKA) family. ATP-dependent PFK group I subfamily. Prokaryotic clade 'B1' sub-subfamily. Homotetramer. Mg(2+) serves as cofactor.

It localises to the cytoplasm. It carries out the reaction beta-D-fructose 6-phosphate + ATP = beta-D-fructose 1,6-bisphosphate + ADP + H(+). It functions in the pathway carbohydrate degradation; glycolysis; D-glyceraldehyde 3-phosphate and glycerone phosphate from D-glucose: step 3/4. Allosterically activated by ADP and other diphosphonucleosides, and allosterically inhibited by phosphoenolpyruvate. Functionally, catalyzes the phosphorylation of D-fructose 6-phosphate to fructose 1,6-bisphosphate by ATP, the first committing step of glycolysis. In Spiroplasma citri, this protein is ATP-dependent 6-phosphofructokinase.